An 898-amino-acid chain; its full sequence is Phosphoenolpyruvate carboxylase (898 aa).

Residues histidine 138 and lysine 561 contribute to the active site.

It belongs to the PEPCase type 1 family. Requires Mg(2+) as cofactor.

It catalyses the reaction oxaloacetate + phosphate = phosphoenolpyruvate + hydrogencarbonate. Forms oxaloacetate, a four-carbon dicarboxylic acid source for the tricarboxylic acid cycle. The protein is Phosphoenolpyruvate carboxylase of Streptococcus suis (strain 98HAH33).